The sequence spans 600 residues: Putative heme-binding protein NP_2262A (600 aa).

Histidine 180 contacts heme. The tract at residues 261–289 (TSETGHGGADSQTSSESSGGRPSTDPSHD) is disordered. Polar residues predominate over residues 270-285 (DSQTSSESSGGRPSTD). In terms of domain architecture, ABM spans 510–598 (GTMGMFYTVK…VLADRPRHVF (89 aa)).

This sequence in the N-terminal section; belongs to the ChdC family.

This chain is Putative heme-binding protein NP_2262A, found in Natronomonas pharaonis (strain ATCC 35678 / DSM 2160 / CIP 103997 / JCM 8858 / NBRC 14720 / NCIMB 2260 / Gabara) (Halobacterium pharaonis).